The sequence spans 111 residues: Cell division protein FtsB (111 aa).

At 1 to 3 (MGK) the chain is on the cytoplasmic side. A helical membrane pass occupies residues 4–21 (LTLLLLILLGWLQYSLWL). Topologically, residues 22–111 (GKNGIHDYVR…TNTPSNNIQR (90 aa)) are periplasmic. Residues 33–63 (KDDVVVQQGNNAKLKDRNEQLFAEIDDLNGG) are a coiled coil. Residues 90–111 (ESNHRNANTAPSTNTPSNNIQR) are disordered. The span at 95–111 (NANTAPSTNTPSNNIQR) shows a compositional bias: low complexity.

It belongs to the FtsB family. Part of a complex composed of FtsB, FtsL and FtsQ.

Its subcellular location is the cell inner membrane. Its function is as follows. Essential cell division protein. May link together the upstream cell division proteins, which are predominantly cytoplasmic, with the downstream cell division proteins, which are predominantly periplasmic. This Pectobacterium carotovorum subsp. carotovorum (strain PC1) protein is Cell division protein FtsB.